The primary structure comprises 286 residues: Aquaporin PIP2-4 (286 aa).

The next 2 helical transmembrane spans lie at 40-60 and 77-97; these read ALIA…ATVI and CGGV…FILV. The NPA 1 signature appears at 109–111; that stretch reads NPA. 3 consecutive transmembrane segments (helical) span residues 128–148, 170–190, and 204–224; these read LLYM…VKGF, GTGL…VFSA, and VLAP…TIPI. The NPA 2 signature appears at 230–232; that stretch reads NPA. The chain crosses the membrane as a helical span at residues 252–272; sequence IFWVGPFIGAAIAALYHQVIL.

This sequence belongs to the MIP/aquaporin (TC 1.A.8) family. PIP (TC 1.A.8.11) subfamily. In terms of tissue distribution, expressed in roots.

It localises to the cell membrane. Water channel required to facilitate the transport of water across cell membrane. May play a role in root water uptake. This chain is Aquaporin PIP2-4 (PIP2-4), found in Oryza sativa subsp. japonica (Rice).